Consider the following 263-residue polypeptide: 3-methyl-2-oxobutanoate hydroxymethyltransferase (263 aa).

Mg(2+)-binding residues include D45 and D84. Residues 45 to 46 (DS), D84, and K112 contribute to the 3-methyl-2-oxobutanoate site. E114 contributes to the Mg(2+) binding site. E181 acts as the Proton acceptor in catalysis.

Belongs to the PanB family. As to quaternary structure, homodecamer; pentamer of dimers. It depends on Mg(2+) as a cofactor.

The protein resides in the cytoplasm. It carries out the reaction 3-methyl-2-oxobutanoate + (6R)-5,10-methylene-5,6,7,8-tetrahydrofolate + H2O = 2-dehydropantoate + (6S)-5,6,7,8-tetrahydrofolate. Its pathway is cofactor biosynthesis; (R)-pantothenate biosynthesis; (R)-pantoate from 3-methyl-2-oxobutanoate: step 1/2. Functionally, catalyzes the reversible reaction in which hydroxymethyl group from 5,10-methylenetetrahydrofolate is transferred onto alpha-ketoisovalerate to form ketopantoate. The sequence is that of 3-methyl-2-oxobutanoate hydroxymethyltransferase from Buchnera aphidicola subsp. Schizaphis graminum (strain Sg).